Reading from the N-terminus, the 137-residue chain is Large ribosomal subunit protein uL16 (137 aa).

Over residues 1–17 (MLQPKRTKFRKTHKGRN) the composition is skewed to basic residues. The tract at residues 1 to 24 (MLQPKRTKFRKTHKGRNRGLANSG) is disordered.

This sequence belongs to the universal ribosomal protein uL16 family. Part of the 50S ribosomal subunit.

In terms of biological role, binds 23S rRNA and is also seen to make contacts with the A and possibly P site tRNAs. In Aeromonas hydrophila subsp. hydrophila (strain ATCC 7966 / DSM 30187 / BCRC 13018 / CCUG 14551 / JCM 1027 / KCTC 2358 / NCIMB 9240 / NCTC 8049), this protein is Large ribosomal subunit protein uL16.